Consider the following 261-residue polypeptide: MKNPLKTIRETKPLVHHITNWVTIYDCANITRAFGALPVMAHAPEECADMTGISSALVLNIGTLTSEIIDSMLLSAAAANKKKIPVVLDAVGVGATRFRDEMAAKILGSVRVDIIKGNYSEIAKLAGENAETKGVESTSISADPQKVAKEFAKSSSSVVVMTGKEDVISDGNRTFVVKNGHELMGSIVGTGCMAASIIGSFASVNPDYCDAAKDALCYFGAAGELAAKNSAGPGSFKVNLYDEVFNLSDEKVQAMMKVEEL.

Substrate is bound at residue Met40. The ATP site is built by Lys116 and Thr162. Position 189 (Gly189) interacts with substrate.

Belongs to the Thz kinase family. Mg(2+) is required as a cofactor.

It carries out the reaction 5-(2-hydroxyethyl)-4-methylthiazole + ATP = 4-methyl-5-(2-phosphooxyethyl)-thiazole + ADP + H(+). It functions in the pathway cofactor biosynthesis; thiamine diphosphate biosynthesis; 4-methyl-5-(2-phosphoethyl)-thiazole from 5-(2-hydroxyethyl)-4-methylthiazole: step 1/1. Functionally, catalyzes the phosphorylation of the hydroxyl group of 4-methyl-5-beta-hydroxyethylthiazole (THZ). This is Hydroxyethylthiazole kinase from Methanosarcina mazei (strain ATCC BAA-159 / DSM 3647 / Goe1 / Go1 / JCM 11833 / OCM 88) (Methanosarcina frisia).